The chain runs to 95 residues: Bombyxin C-2 (95 aa).

An N-terminal signal peptide occupies residues 1–19 (MKLVILLVVVSAMLVLGGA). Glutamine 20 carries the post-translational modification Pyrrolidone carboxylic acid. 3 disulfide bridges follow: cysteine 27–cysteine 76, cysteine 39–cysteine 89, and cysteine 75–cysteine 80. A propeptide spans 47 to 67 (SGSQYAGYGWPWLPPFSSSRG) (c peptide like).

This sequence belongs to the insulin family. Heterodimer of a B chain and an A chain linked by two disulfide bonds.

Its subcellular location is the secreted. In terms of biological role, brain peptide responsible for activation of prothoracic glands to produce ecdysone in insects. The sequence is that of Bombyxin C-2 (BBXC2) from Bombyx mori (Silk moth).